The primary structure comprises 309 residues: HPr kinase/phosphorylase (309 aa).

Residues H138 and K159 contribute to the active site. Residue 153 to 160 (GKSGVGKS) coordinates ATP. S160 contacts Mg(2+). The active-site Proton acceptor; for phosphorylation activity. Proton donor; for dephosphorylation activity is the D177. Residues 201 to 210 (LEIRGLGIIN) are important for the catalytic mechanism of both phosphorylation and dephosphorylation. E202 lines the Mg(2+) pocket. R243 is a catalytic residue. Residues 264-269 (PVRPGR) are important for the catalytic mechanism of dephosphorylation.

This sequence belongs to the HPrK/P family. As to quaternary structure, homohexamer. The cofactor is Mg(2+).

The catalysed reaction is [HPr protein]-L-serine + ATP = [HPr protein]-O-phospho-L-serine + ADP + H(+). It carries out the reaction [HPr protein]-O-phospho-L-serine + phosphate + H(+) = [HPr protein]-L-serine + diphosphate. Catalyzes the ATP- as well as the pyrophosphate-dependent phosphorylation of a specific serine residue in HPr, a phosphocarrier protein of the phosphoenolpyruvate-dependent sugar phosphotransferase system (PTS). HprK/P also catalyzes the pyrophosphate-producing, inorganic phosphate-dependent dephosphorylation (phosphorolysis) of seryl-phosphorylated HPr (P-Ser-HPr). The two antagonistic activities of HprK/P are regulated by several intracellular metabolites, which change their concentration in response to the absence or presence of rapidly metabolisable carbon sources (glucose, fructose, etc.) in the growth medium. Also phosphorylates/dephosphorylates the HPr-like catabolite repression protein crh on a specific serine residue. Therefore, by controlling the phosphorylation state of HPr and crh, HPrK/P is a sensor enzyme that plays a major role in the regulation of carbon metabolism and sugar transport: it mediates carbon catabolite repression (CCR), and regulates PTS-catalyzed carbohydrate uptake and inducer exclusion. The sequence is that of HPr kinase/phosphorylase from Geobacillus thermodenitrificans (strain NG80-2).